The following is a 335-amino-acid chain: Phenylalanine--tRNA ligase alpha subunit (335 aa).

E262 lines the Mg(2+) pocket.

The protein belongs to the class-II aminoacyl-tRNA synthetase family. Phe-tRNA synthetase alpha subunit type 1 subfamily. In terms of assembly, tetramer of two alpha and two beta subunits. The cofactor is Mg(2+).

The protein localises to the cytoplasm. It carries out the reaction tRNA(Phe) + L-phenylalanine + ATP = L-phenylalanyl-tRNA(Phe) + AMP + diphosphate + H(+). This chain is Phenylalanine--tRNA ligase alpha subunit, found in Prochlorococcus marinus (strain MIT 9313).